We begin with the raw amino-acid sequence, 1325 residues long: uncharacterized protein (1325 aa).

An N-terminal signal peptide occupies residues M1 to A27. The N-palmitoyl cysteine moiety is linked to residue C28. The S-diacylglycerol cysteine moiety is linked to residue C28. 2 disordered regions span residues R379–Q402 and N430–S464. Over residues T436–S448 the composition is skewed to gly residues. Residues T449–S464 show a composition bias toward low complexity.

The protein belongs to the MG307/MG309/MG338 family.

It is found in the cell membrane. This is an uncharacterized protein from Mycoplasma pneumoniae (strain ATCC 29342 / M129 / Subtype 1) (Mycoplasmoides pneumoniae).